Consider the following 436-residue polypeptide: Forkhead box protein I3 (436 aa).

The residue at position 132 (Ser-132) is a Phosphoserine. A DNA-binding region (fork-head) is located at residues Arg-158–Lys-252. A Nuclear localization signal motif is present at residues Arg-248 to Arg-254. Disordered stretches follow at residues Arg-249–Ser-319 and Ser-340–Gln-410. Low complexity predominate over residues Ala-257 to Ser-277. Positions Ser-278–Lys-287 are enriched in gly residues. Phosphoserine is present on residues Ser-292 and Ser-302. Positions Ser-385–Gln-410 are enriched in low complexity. The 9aaTAD signature appears at Ser-422–Pro-430.

Phosphorylation promotes the transcription factor activity. Dephosphorylation by protein phosphatase 2A (PP2A) reduces its activity.

The protein resides in the nucleus. In terms of biological role, transcription factor required for pharyngeal arch development, and which is involved in hair, ear, jaw and dental development. May act as a pioneer transcription factor during pharyngeal arch development. Required for the development of the epithelium of hair and whisker placodes and that of teeth. Required for hair follicle stem cell specification. Acts downstream of TBX1 for the formation of the thymus and parathyroid glands from the third pharyngeal pouch. The protein is Forkhead box protein I3 of Canis lupus familiaris (Dog).